The following is a 483-amino-acid chain: Cobyric acid synthase (483 aa).

Residues 252 to 439 (KLNVVVPVLT…LHGFFDEAEA (188 aa)) form the GATase cobBQ-type domain. The active-site Nucleophile is the Cys-333. His-431 is an active-site residue.

This sequence belongs to the CobB/CobQ family. CobQ subfamily.

The protein operates within cofactor biosynthesis; adenosylcobalamin biosynthesis. Catalyzes amidations at positions B, D, E, and G on adenosylcobyrinic A,C-diamide. NH(2) groups are provided by glutamine, and one molecule of ATP is hydrogenolyzed for each amidation. This Vibrio parahaemolyticus serotype O3:K6 (strain RIMD 2210633) protein is Cobyric acid synthase.